Consider the following 338-residue polypeptide: UDP-3-O-acylglucosamine N-acyltransferase (338 aa).

Catalysis depends on H239, which acts as the Proton acceptor.

Belongs to the transferase hexapeptide repeat family. LpxD subfamily. Homotrimer.

The catalysed reaction is a UDP-3-O-[(3R)-3-hydroxyacyl]-alpha-D-glucosamine + a (3R)-hydroxyacyl-[ACP] = a UDP-2-N,3-O-bis[(3R)-3-hydroxyacyl]-alpha-D-glucosamine + holo-[ACP] + H(+). It functions in the pathway bacterial outer membrane biogenesis; LPS lipid A biosynthesis. In terms of biological role, catalyzes the N-acylation of UDP-3-O-acylglucosamine using 3-hydroxyacyl-ACP as the acyl donor. Is involved in the biosynthesis of lipid A, a phosphorylated glycolipid that anchors the lipopolysaccharide to the outer membrane of the cell. The polypeptide is UDP-3-O-acylglucosamine N-acyltransferase (Thermosynechococcus vestitus (strain NIES-2133 / IAM M-273 / BP-1)).